The following is a 166-amino-acid chain: Endoribonuclease YbeY (166 aa).

Zn(2+) contacts are provided by His-111, His-115, and His-121. Positions 141 to 166 are disordered; sequence LGYPDPYADDESADHPHSDTPSKDHE. Residues 153 to 166 are compositionally biased toward basic and acidic residues; sequence ADHPHSDTPSKDHE.

Belongs to the endoribonuclease YbeY family. The cofactor is Zn(2+).

It is found in the cytoplasm. Functionally, single strand-specific metallo-endoribonuclease involved in late-stage 70S ribosome quality control and in maturation of the 3' terminus of the 16S rRNA. This is Endoribonuclease YbeY from Pseudomonas syringae pv. tomato (strain ATCC BAA-871 / DC3000).